We begin with the raw amino-acid sequence, 145 residues long: D-aminoacyl-tRNA deacylase (145 aa).

A Gly-cisPro motif, important for rejection of L-amino acids motif is present at residues 137 to 138 (GP).

The protein belongs to the DTD family. Homodimer.

The protein localises to the cytoplasm. The catalysed reaction is glycyl-tRNA(Ala) + H2O = tRNA(Ala) + glycine + H(+). It carries out the reaction a D-aminoacyl-tRNA + H2O = a tRNA + a D-alpha-amino acid + H(+). In terms of biological role, an aminoacyl-tRNA editing enzyme that deacylates mischarged D-aminoacyl-tRNAs. Also deacylates mischarged glycyl-tRNA(Ala), protecting cells against glycine mischarging by AlaRS. Acts via tRNA-based rather than protein-based catalysis; rejects L-amino acids rather than detecting D-amino acids in the active site. By recycling D-aminoacyl-tRNA to D-amino acids and free tRNA molecules, this enzyme counteracts the toxicity associated with the formation of D-aminoacyl-tRNA entities in vivo and helps enforce protein L-homochirality. The polypeptide is D-aminoacyl-tRNA deacylase (Rhodopirellula baltica (strain DSM 10527 / NCIMB 13988 / SH1)).